A 672-amino-acid chain; its full sequence is Glycerophosphocholine phosphodiesterase GPCPD1 (672 aa).

The 113-residue stretch at 1-113 (MTPSQVTFEI…IIIDDGQFGI (113 aa)) folds into the CBM20 domain. Residues arginine 68 and 86–87 (HK) each bind substrate. Serine 175 is subject to Phosphoserine. One can recognise a GP-PDE domain in the interval 318–618 (PLDVGHRGAG…DRIYDWMPEQ (301 aa)). A Phosphotyrosine modification is found at tyrosine 608.

The protein belongs to the glycerophosphoryl diester phosphodiesterase family.

The protein localises to the cytoplasm. It is found in the cytosol. It catalyses the reaction sn-glycerol 3-phosphocholine + H2O = sn-glycerol 3-phosphate + choline + H(+). In terms of biological role, may be involved in the negative regulation of skeletal muscle differentiation, independently of its glycerophosphocholine phosphodiesterase activity. The protein is Glycerophosphocholine phosphodiesterase GPCPD1 (Gpcpd1) of Rattus norvegicus (Rat).